The chain runs to 314 residues: Acetaldehyde dehydrogenase 2 (314 aa).

NAD(+) is bound at residue 15–18 (SGNI). Cys-133 (acyl-thioester intermediate) is an active-site residue. NAD(+) is bound by residues 164 to 172 (SAGPGTRAN) and Asn-291.

It belongs to the acetaldehyde dehydrogenase family.

It catalyses the reaction acetaldehyde + NAD(+) + CoA = acetyl-CoA + NADH + H(+). This chain is Acetaldehyde dehydrogenase 2, found in Pseudomonas putida (strain ATCC 700007 / DSM 6899 / JCM 31910 / BCRC 17059 / LMG 24140 / F1).